The sequence spans 448 residues: Thymidine phosphorylase (448 aa).

It belongs to the thymidine/pyrimidine-nucleoside phosphorylase family. As to quaternary structure, homodimer.

The catalysed reaction is thymidine + phosphate = 2-deoxy-alpha-D-ribose 1-phosphate + thymine. It participates in pyrimidine metabolism; dTMP biosynthesis via salvage pathway; dTMP from thymine: step 1/2. Functionally, the enzymes which catalyze the reversible phosphorolysis of pyrimidine nucleosides are involved in the degradation of these compounds and in their utilization as carbon and energy sources, or in the rescue of pyrimidine bases for nucleotide synthesis. The protein is Thymidine phosphorylase of Vibrio cholerae serotype O1 (strain ATCC 39315 / El Tor Inaba N16961).